The primary structure comprises 343 residues: SET and MYND domain-containing protein DDB_G0292454 (343 aa).

The SET domain occupies 77-307 (EPFISYPSII…PGDEITISYT (231 aa)). C93, C96, C111, C114, C120, C124, H133, and C137 together coordinate Zn(2+). Residues 93–137 (CNHCLKEIKKEEEEIKQECEECKVYKYCSIECKEKSSIEYHSVLC) form an MYND-type zinc finger.

It belongs to the class V-like SAM-binding methyltransferase superfamily.

Functionally, probable methyltransferase. The chain is SET and MYND domain-containing protein DDB_G0292454 from Dictyostelium discoideum (Social amoeba).